The sequence spans 289 residues: Energy-coupling factor transporter ATP-binding protein EcfA2 (289 aa).

The 243-residue stretch at 3–245 folds into the ABC transporter domain; the sequence is IEFKNVDYVY…QEWVKKHYLD (243 aa). ATP is bound at residue 40–47; that stretch reads GHTGSGKS.

Belongs to the ABC transporter superfamily. Energy-coupling factor EcfA family. In terms of assembly, forms a stable energy-coupling factor (ECF) transporter complex composed of 2 membrane-embedded substrate-binding proteins (S component), 2 ATP-binding proteins (A component) and 2 transmembrane proteins (T component).

The protein resides in the cell membrane. ATP-binding (A) component of a common energy-coupling factor (ECF) ABC-transporter complex. Unlike classic ABC transporters this ECF transporter provides the energy necessary to transport a number of different substrates. The sequence is that of Energy-coupling factor transporter ATP-binding protein EcfA2 from Lactobacillus johnsonii (strain CNCM I-12250 / La1 / NCC 533).